Here is a 226-residue protein sequence, read N- to C-terminus: Peroxiredoxin-like 2C (226 aa).

This sequence belongs to the peroxiredoxin-like PRXL2 family. PRXL2C subfamily. In terms of tissue distribution, expressed in gastric tissues.

Functionally, may positively regulate ERK1/2 signaling and AKT1 activation leading to HIF1A up-regulation with an increased expression of glycolysis genes and enhanced glycolysis. The chain is Peroxiredoxin-like 2C from Homo sapiens (Human).